The following is a 512-amino-acid chain: Serine palmitoyltransferase 3 (512 aa).

N6-(pyridoxal phosphate)lysine is present on Lys345.

It belongs to the class-II pyridoxal-phosphate-dependent aminotransferase family. In terms of assembly, heterodimer of sptl-1/sptl-3. The cofactor is pyridoxal 5'-phosphate.

It carries out the reaction L-serine + hexadecanoyl-CoA + H(+) = 3-oxosphinganine + CO2 + CoA. It participates in lipid metabolism; sphingolipid metabolism. In terms of biological role, component of the serine palmitoyltransferase (SPT) that catalyzes the first committed step in sphingolipid biosynthesis, which is the condensation of an acyl-CoA species and L-serine. The catalytic core is composed of a heterodimer of sptl-1 and sptl-2 or sptl-1 and sptl-3. Required for the specification of abicobasal polarity and development of the gut lumen. The sequence is that of Serine palmitoyltransferase 3 (sptl-3) from Caenorhabditis elegans.